We begin with the raw amino-acid sequence, 187 residues long: dITP/XTP pyrophosphatase (187 aa).

A substrate-binding site is contributed by 7-12 (TGNKHK). Positions 36 and 64 each coordinate Mg(2+). The Proton acceptor role is filled by Asp-64. Residues Ala-65, 140–143 (FAFD), Lys-163, and 168–169 (HR) contribute to the substrate site.

This sequence belongs to the HAM1 NTPase family. Homodimer. The cofactor is Mg(2+).

The enzyme catalyses XTP + H2O = XMP + diphosphate + H(+). The catalysed reaction is dITP + H2O = dIMP + diphosphate + H(+). It carries out the reaction ITP + H2O = IMP + diphosphate + H(+). Pyrophosphatase that catalyzes the hydrolysis of nucleoside triphosphates to their monophosphate derivatives, with a high preference for the non-canonical purine nucleotides XTP (xanthosine triphosphate), dITP (deoxyinosine triphosphate) and ITP. Seems to function as a house-cleaning enzyme that removes non-canonical purine nucleotides from the nucleotide pool, thus preventing their incorporation into DNA/RNA and avoiding chromosomal lesions. This chain is dITP/XTP pyrophosphatase, found in Methanothermobacter marburgensis (strain ATCC BAA-927 / DSM 2133 / JCM 14651 / NBRC 100331 / OCM 82 / Marburg) (Methanobacterium thermoautotrophicum).